The primary structure comprises 2062 residues: Ankyrin repeat domain-containing protein 12 (2062 aa).

2 disordered regions span residues 1-119 (MPKS…GNKK) and 145-188 (ARDN…GETP). Polar residues predominate over residues 9 to 20 (PIQSENSDSDSN). 2 stretches are compositionally biased toward basic and acidic residues: residues 41–57 (PKIERSDVSKEMKEKSS) and 100–117 (YSEKEGPEKKKTKKEAGN). Residues 145–172 (ARDNSPDSTPNHPSQTTPAQKKTPSSSS) are compositionally biased toward polar residues. Ser149 bears the Phosphoserine mark. Positions 173 to 187 (RQKDKVNKRNERGET) are enriched in basic and acidic residues. 3 ANK repeats span residues 184–213 (RGETPLHMAAIRGDVKQVKELISLGANVNV), 217–246 (AGWTPLHEACNVGYYDVAKILIAAGADVNT), and 250–280 (DDDTPLHDSASSGHRDIVKLLLRHGGNPFQA). Disordered stretches follow at residues 301-338 (KREVPLSDDDESYTDSEEAQSVNPSSVDENIDSETEKD), 409-501 (KSFK…TRIT), 538-577 (ISTGKSPKHSCGLSEKQSTPLKQEHTKTCLSPGSSEMSLQ), 609-683 (QKDF…DSAK), 727-788 (EKNI…FTSL), 812-1073 (EKHI…LVND), 1097-1227 (KHKE…RPPV), and 1328-1350 (EESNQGSLLTVPGDTSPSPKPEV). Residues 306–318 (LSDDDESYTDSEE) show a composition bias toward acidic residues. Composition is skewed to polar residues over residues 319-328 (AQSVNPSSVD) and 437-454 (KKISTSCSVIPETSNSDM). Residues 455–467 (QTKKEYVVSGEHK) are compositionally biased toward basic and acidic residues. Over residues 468 to 480 (QKGKVKRKLKNQN) the composition is skewed to basic residues. Positions 481–498 (KNKENQELKQEKEGKENT) are enriched in basic and acidic residues. Ser543 bears the Phosphoserine mark. A compositionally biased stretch (polar residues) spans 565–575 (TCLSPGSSEMS). 8 stretches are compositionally biased toward basic and acidic residues: residues 609–631 (QKDFHLEFGEKSNAKIKDEDHSP), 639–649 (TLKKMDKEGKT), 658–683 (KEREKEKHKKEIEGEKEKYKTKDSAK), 727–784 (EKNI…KDSE), 812–969 (EKHI…DKES), 977–1037 (HIQE…KDKI), 1061–1072 (KDTRPKEKRLVN), and 1103–1157 (KQKE…KQPK). Ser630 bears the Phosphoserine mark. Residue Ser861 is modified to Phosphoserine. Polar residues predominate over residues 1161–1189 (SNRSQSVDTKNVMTLGKSSFVSDNSLNRS). The segment covering 1200 to 1213 (SSRSVSMISVASSE) has biased composition (low complexity). Residues 1328-1344 (EESNQGSLLTVPGDTSP) are compositionally biased toward polar residues. Ser1401 is modified (phosphoserine). Disordered stretches follow at residues 1721 to 1744 (NAEDDKTENQIPQRMTRNKANTMA) and 1756 to 1795 (LLSEKDSESSSPRGRIRLTEDDDPQIHHPRKRKVSRVPQP). Residues 1729-1744 (NQIPQRMTRNKANTMA) are compositionally biased toward polar residues.

As to quaternary structure, interacts with the PAS region of the p160 coactivators.

It is found in the nucleus. Functionally, may recruit HDACs to the p160 coactivators/nuclear receptor complex to inhibit ligand-dependent transactivation. The chain is Ankyrin repeat domain-containing protein 12 (ANKRD12) from Homo sapiens (Human).